Consider the following 671-residue polypeptide: cGMP-dependent protein kinase 1 (671 aa).

N-acetylserine is present on serine 2. A coiled-coil region spans residues serine 2–threonine 59. The required for dimerization stretch occupies residues serine 2–aspartate 102. The tract at residues alanine 9 to glutamine 44 is leucine-zipper. The segment at proline 50–histidine 75 is autoinhibitory domain. Threonine 59 is modified (phosphothreonine; by autocatalysis). Residues phenylalanine 103–proline 220 form a cGMP-binding, high affinity region. 3',5'-cyclic AMP is bound by residues glycine 167–alanine 170 and arginine 177–threonine 178. 3',5'-cyclic GMP is bound by residues glycine 167 to alanine 170, arginine 177 to threonine 178, arginine 282, glycine 291 to alanine 294, arginine 301 to threonine 302, and tyrosine 336. Positions threonine 221–alanine 341 are cGMP-binding, low affinity. 3',5'-cyclic AMP is bound by residues glycine 291–alanine 294, arginine 301–threonine 302, and tyrosine 336. The Protein kinase domain occupies phenylalanine 360–phenylalanine 619. ATP contacts are provided by residues leucine 366–valine 374 and lysine 390. The Proton acceptor role is filled by aspartate 484. Position 515 is a phosphothreonine (threonine 515). Residues glutamate 620 to phenylalanine 671 form the AGC-kinase C-terminal domain. The interval proline 635–phenylalanine 671 is disordered. Residues phenylalanine 652–proline 661 show a composition bias toward acidic residues.

This sequence belongs to the protein kinase superfamily. AGC Ser/Thr protein kinase family. cGMP subfamily. In terms of assembly, isoform alpha: parallel homodimer or heterodimer and also heterotetramer. Interacts directly with PPP1R12A. Non-covalent dimer of dimer of PRKG1-PRKG1 and PPP1R12A-PPP1R12A. This interaction targets PRKG1 to stress fibers to mediate smooth muscle cell relaxation and vasodilation in responses to rises in cGMP. Isoform beta: antiparallel homodimer. Part of cGMP kinase signaling complex at least composed of ACTA2/alpha-actin, CNN1/calponin H1, PLN/phospholamban, PRKG1 and ITPR1. Interacts with IRAG1. Forms a stable complex with ITPR1, IRAG1, and isoform beta of PRKG1. Interacts with TRPC7 (via ankyrin repeat domain). Isoform alpha interacts with RGS2. Interacts with GTF2I. Autophosphorylation increases kinase activity. In terms of processing, 65 kDa monomer is produced by proteolytic cleavage. As to expression, primarily expressed in lung and placenta.

It localises to the cytoplasm. It carries out the reaction L-seryl-[protein] + ATP = O-phospho-L-seryl-[protein] + ADP + H(+). It catalyses the reaction L-threonyl-[protein] + ATP = O-phospho-L-threonyl-[protein] + ADP + H(+). In the absence of cGMP, PRKG1 activity is suppressed by autoinhibitory contacts. Its function is as follows. Serine/threonine protein kinase that acts as a key mediator of the nitric oxide (NO)/cGMP signaling pathway. GMP binding activates PRKG1, which phosphorylates serines and threonines on many cellular proteins. Numerous protein targets for PRKG1 phosphorylation are implicated in modulating cellular calcium, but the contribution of each of these targets may vary substantially among cell types. Proteins that are phosphorylated by PRKG1 regulate platelet activation and adhesion, smooth muscle contraction, cardiac function, gene expression, feedback of the NO-signaling pathway, and other processes involved in several aspects of the CNS like axon guidance, hippocampal and cerebellar learning, circadian rhythm and nociception. Smooth muscle relaxation is mediated through lowering of intracellular free calcium, by desensitization of contractile proteins to calcium, and by decrease in the contractile state of smooth muscle or in platelet activation. Regulates intracellular calcium levels via several pathways: phosphorylates IRAG1 and inhibits IP3-induced Ca(2+) release from intracellular stores, phosphorylation of KCNMA1 (BKCa) channels decreases intracellular Ca(2+) levels, which leads to increased opening of this channel. PRKG1 phosphorylates the canonical transient receptor potential channel (TRPC) family which inactivates the associated inward calcium current. Another mode of action of NO/cGMP/PKGI signaling involves PKGI-mediated inactivation of the Ras homolog gene family member A (RhoA). Phosphorylation of RHOA by PRKG1 blocks the action of this protein in myriad processes: regulation of RHOA translocation; decreasing contraction; controlling vesicle trafficking, reduction of myosin light chain phosphorylation resulting in vasorelaxation. Activation of PRKG1 by NO signaling also alters gene expression in a number of tissues. In smooth muscle cells, increased cGMP and PRKG1 activity influence expression of smooth muscle-specific contractile proteins, levels of proteins in the NO/cGMP signaling pathway, down-regulation of the matrix proteins osteopontin and thrombospondin-1 to limit smooth muscle cell migration and phenotype. Regulates vasodilator-stimulated phosphoprotein (VASP) functions in platelets and smooth muscle. The polypeptide is cGMP-dependent protein kinase 1 (PRKG1) (Homo sapiens (Human)).